The sequence spans 488 residues: Mannosylglycerate hydrolase MGH1 (488 aa).

Substrate contacts are provided by residues Tyr94, 98-101 (WNWD), Tyr146, Gln167, and Gly227. The active-site Proton donor is Asp229. Substrate contacts are provided by residues Arg262 and 415-416 (YW). The active-site Proton acceptor is Glu459.

The protein belongs to the glycosyl hydrolase 63 family.

It catalyses the reaction (2R)-2-O-(alpha-D-mannosyl)-glycerate + H2O = D-mannose + (R)-glycerate. The enzyme catalyses (2R)-2-O-(alpha-D-glucopyranosyl)-glycerate + H2O = (R)-glycerate + D-glucose. Activity is not dependent on divalent cations, but it is enhanced by Mn(2+). Its function is as follows. Catalyzes the hydrolysis of alpha-D-mannosyl-glycerate (MG) to D-glycerate and D-mannose. Can also hydrolyze alpha-D-glucopyranosyl-glycerate (GG)with lower efficiency. The chain is Mannosylglycerate hydrolase MGH1 from Selaginella moellendorffii (Spikemoss).